A 415-amino-acid polypeptide reads, in one-letter code: Gamma-glutamyl phosphate reductase (415 aa).

This sequence belongs to the gamma-glutamyl phosphate reductase family.

Its subcellular location is the cytoplasm. The enzyme catalyses L-glutamate 5-semialdehyde + phosphate + NADP(+) = L-glutamyl 5-phosphate + NADPH + H(+). Its pathway is amino-acid biosynthesis; L-proline biosynthesis; L-glutamate 5-semialdehyde from L-glutamate: step 2/2. Functionally, catalyzes the NADPH-dependent reduction of L-glutamate 5-phosphate into L-glutamate 5-semialdehyde and phosphate. The product spontaneously undergoes cyclization to form 1-pyrroline-5-carboxylate. The chain is Gamma-glutamyl phosphate reductase from Clostridium perfringens (strain 13 / Type A).